We begin with the raw amino-acid sequence, 619 residues long: Phosphoenolpyruvate carboxykinase [GTP] (619 aa).

Substrate-binding positions include arginine 81 and 230–232 (YGG). Mn(2+) is bound by residues lysine 239 and histidine 259. Serine 281 contributes to the substrate binding site. 282–287 (ACGKTN) serves as a coordination point for GTP. Cysteine 283 is a catalytic residue. Aspartate 306 provides a ligand contact to Mn(2+). 399-401 (NSR) contacts substrate. Residues arginine 401, arginine 432, and 525 to 528 (YGQN) each bind GTP.

The protein belongs to the phosphoenolpyruvate carboxykinase [GTP] family. As to quaternary structure, monomer. The cofactor is Mn(2+).

The catalysed reaction is oxaloacetate + GTP = phosphoenolpyruvate + GDP + CO2. Functionally, in parasitic nematodes PEPCK carboxylates phosphoenolpyruvate to oxaloacetate thus introducing the products of glycolysis to mitochondrial metabolism. Catalyzes the conversion of oxaloacetate (OAA) to phosphoenolpyruvate (PEP), the rate-limiting step in the metabolic pathway that produces glucose from lactate and other precursors derived from the citric acid cycle. In Haemonchus contortus (Barber pole worm), this protein is Phosphoenolpyruvate carboxykinase [GTP] (PEPCK).